The primary structure comprises 378 residues: tRNA (guanine(26)-N(2))-dimethyltransferase (378 aa).

A Trm1 methyltransferase domain is found at 4–374 (KEVTEGKVRI…KGYEEIIRCV (371 aa)). The S-adenosyl-L-methionine site is built by arginine 44, arginine 69, aspartate 87, aspartate 114, and alanine 115. 4 residues coordinate Zn(2+): cysteine 246, cysteine 249, cysteine 263, and cysteine 266.

The protein belongs to the class I-like SAM-binding methyltransferase superfamily. Trm1 family.

It carries out the reaction guanosine(26) in tRNA + 2 S-adenosyl-L-methionine = N(2)-dimethylguanosine(26) in tRNA + 2 S-adenosyl-L-homocysteine + 2 H(+). Functionally, dimethylates a single guanine residue at position 26 of a number of tRNAs using S-adenosyl-L-methionine as donor of the methyl groups. The sequence is that of tRNA (guanine(26)-N(2))-dimethyltransferase from Saccharolobus islandicus (strain M.14.25 / Kamchatka #1) (Sulfolobus islandicus).